The following is a 355-amino-acid chain: 3-dehydroquinate synthase (355 aa).

NAD(+) is bound by residues 69–74 (DGEQHK), 103–107 (GVIGD), 127–128 (TT), Lys140, Lys149, and 167–170 (TLQT). 3 residues coordinate Zn(2+): Glu182, His245, and His262.

The protein belongs to the sugar phosphate cyclases superfamily. Dehydroquinate synthase family. Co(2+) is required as a cofactor. Requires Zn(2+) as cofactor. It depends on NAD(+) as a cofactor.

The protein resides in the cytoplasm. It carries out the reaction 7-phospho-2-dehydro-3-deoxy-D-arabino-heptonate = 3-dehydroquinate + phosphate. The protein operates within metabolic intermediate biosynthesis; chorismate biosynthesis; chorismate from D-erythrose 4-phosphate and phosphoenolpyruvate: step 2/7. Its function is as follows. Catalyzes the conversion of 3-deoxy-D-arabino-heptulosonate 7-phosphate (DAHP) to dehydroquinate (DHQ). The polypeptide is 3-dehydroquinate synthase (Pseudoalteromonas atlantica (strain T6c / ATCC BAA-1087)).